The chain runs to 131 residues: Large ribosomal subunit protein bL19 (131 aa).

Belongs to the bacterial ribosomal protein bL19 family.

Functionally, this protein is located at the 30S-50S ribosomal subunit interface and may play a role in the structure and function of the aminoacyl-tRNA binding site. This is Large ribosomal subunit protein bL19 from Synechococcus sp. (strain CC9902).